The sequence spans 114 residues: Hydrogenase maturation factor HypA (114 aa).

Ni(2+) is bound at residue H2. Positions 73, 76, 90, and 93 each coordinate Zn(2+).

This sequence belongs to the HypA/HybF family.

Functionally, involved in the maturation of [NiFe] hydrogenases. Required for nickel insertion into the metal center of the hydrogenase. The chain is Hydrogenase maturation factor HypA from Chloroflexus aggregans (strain MD-66 / DSM 9485).